A 215-amino-acid polypeptide reads, in one-letter code: NAD(P)H-quinone oxidoreductase subunit I (215 aa).

2 consecutive 4Fe-4S ferredoxin-type domains span residues 55–84 (GRIH…VDWV) and 95–124 (RNYS…MTEE). [4Fe-4S] cluster is bound by residues cysteine 64, cysteine 67, cysteine 70, cysteine 74, cysteine 104, cysteine 107, cysteine 110, and cysteine 114. The segment at 166 to 215 (AGEMDPHGVPNDRPRAGQLPSQVLETLAPPAKVGAKNEGQSTGTTQEGEA) is disordered. Basic and acidic residues predominate over residues 169–180 (MDPHGVPNDRPR). Residues 203 to 215 (EGQSTGTTQEGEA) show a composition bias toward polar residues.

Belongs to the complex I 23 kDa subunit family. As to quaternary structure, NDH-1 is composed of at least 11 different subunits. Requires [4Fe-4S] cluster as cofactor.

The protein localises to the cellular thylakoid membrane. The catalysed reaction is a plastoquinone + NADH + (n+1) H(+)(in) = a plastoquinol + NAD(+) + n H(+)(out). It carries out the reaction a plastoquinone + NADPH + (n+1) H(+)(in) = a plastoquinol + NADP(+) + n H(+)(out). Its function is as follows. NDH-1 shuttles electrons from an unknown electron donor, via FMN and iron-sulfur (Fe-S) centers, to quinones in the respiratory and/or the photosynthetic chain. The immediate electron acceptor for the enzyme in this species is believed to be plastoquinone. Couples the redox reaction to proton translocation, and thus conserves the redox energy in a proton gradient. This is NAD(P)H-quinone oxidoreductase subunit I from Parasynechococcus marenigrum (strain WH8102).